The primary structure comprises 449 residues: Tubulin alpha chain (449 aa).

GTP contacts are provided by glutamine 11, glutamate 71, serine 140, glycine 144, threonine 145, threonine 179, asparagine 206, and asparagine 228. Glutamate 71 provides a ligand contact to Mg(2+). The active site involves glutamate 254.

This sequence belongs to the tubulin family. In terms of assembly, dimer of alpha and beta chains. A typical microtubule is a hollow water-filled tube with an outer diameter of 25 nm and an inner diameter of 15 nM. Alpha-beta heterodimers associate head-to-tail to form protofilaments running lengthwise along the microtubule wall with the beta-tubulin subunit facing the microtubule plus end conferring a structural polarity. Microtubules usually have 13 protofilaments but different protofilament numbers can be found in some organisms and specialized cells. Mg(2+) serves as cofactor.

Its subcellular location is the cytoplasm. The protein resides in the cytoskeleton. It catalyses the reaction GTP + H2O = GDP + phosphate + H(+). Functionally, tubulin is the major constituent of microtubules, a cylinder consisting of laterally associated linear protofilaments composed of alpha- and beta-tubulin heterodimers. Microtubules grow by the addition of GTP-tubulin dimers to the microtubule end, where a stabilizing cap forms. Below the cap, tubulin dimers are in GDP-bound state, owing to GTPase activity of alpha-tubulin. In Sordaria macrospora (strain ATCC MYA-333 / DSM 997 / K(L3346) / K-hell), this protein is Tubulin alpha chain (TUBA).